Reading from the N-terminus, the 400-residue chain is Elongation factor Tu (400 aa).

The tr-type G domain occupies 10–209 (KEHVNIGTIG…QVDNWIDAPL (200 aa)). A G1 region spans residues 19–26 (GHVDHGKT). Residue 19–26 (GHVDHGKT) participates in GTP binding. Threonine 26 is a binding site for Mg(2+). The tract at residues 61–65 (GITIN) is G2. The segment at 82–85 (DCPG) is G3. Residues 82-86 (DCPGH) and 137-140 (NKVD) each bind GTP. Residues 137–140 (NKVD) form a G4 region. The segment at 179–181 (SAL) is G5.

It belongs to the TRAFAC class translation factor GTPase superfamily. Classic translation factor GTPase family. EF-Tu/EF-1A subfamily. As to quaternary structure, monomer.

It localises to the cytoplasm. It catalyses the reaction GTP + H2O = GDP + phosphate + H(+). GTP hydrolase that promotes the GTP-dependent binding of aminoacyl-tRNA to the A-site of ribosomes during protein biosynthesis. The polypeptide is Elongation factor Tu (Mycoplasma mobile (strain ATCC 43663 / 163K / NCTC 11711) (Mesomycoplasma mobile)).